The primary structure comprises 425 residues: Enolase (425 aa).

Gln-163 contributes to the (2R)-2-phosphoglycerate binding site. Glu-205 serves as the catalytic Proton donor. Asp-242, Glu-285, and Asp-312 together coordinate Mg(2+). Residues Lys-337, Arg-366, Ser-367, and Lys-388 each coordinate (2R)-2-phosphoglycerate. Lys-337 functions as the Proton acceptor in the catalytic mechanism.

Belongs to the enolase family. It depends on Mg(2+) as a cofactor.

It localises to the cytoplasm. The protein resides in the secreted. Its subcellular location is the cell surface. It carries out the reaction (2R)-2-phosphoglycerate = phosphoenolpyruvate + H2O. It participates in carbohydrate degradation; glycolysis; pyruvate from D-glyceraldehyde 3-phosphate: step 4/5. Catalyzes the reversible conversion of 2-phosphoglycerate (2-PG) into phosphoenolpyruvate (PEP). It is essential for the degradation of carbohydrates via glycolysis. This chain is Enolase, found in Jannaschia sp. (strain CCS1).